The following is a 278-amino-acid chain: UPF0758 protein BURPS668_0979 (278 aa).

The tract at residues 1-64 (MQYEIVSAGE…ATAAARRGRD (64 aa)) is disordered. Over residues 22 to 59 (AAAPAAPSSAVPSSAALSSAALSSAARPTGAPPATAAA) the composition is skewed to low complexity. An MPN domain is found at 156-278 (LVDSPGAVDD…TFSFAQAGWI (123 aa)). Residues His227, His229, and Asp240 each contribute to the Zn(2+) site. The short motif at 227–240 (HNHPSGAVRPSAAD) is the JAMM motif element.

Belongs to the UPF0758 family.

In Burkholderia pseudomallei (strain 668), this protein is UPF0758 protein BURPS668_0979.